The primary structure comprises 473 residues: Chaperone SurA (473 aa).

A signal peptide spans 1-36 (MTNDRLFAGIARVLSVRPLAAALALLLTLPLIGVQA). 2 consecutive PpiC domains span residues 214 to 315 (SLAL…KVIE) and 326 to 425 (ITQT…QVLE).

It is found in the periplasm. It catalyses the reaction [protein]-peptidylproline (omega=180) = [protein]-peptidylproline (omega=0). Its function is as follows. Chaperone involved in the correct folding and assembly of outer membrane proteins. Recognizes specific patterns of aromatic residues and the orientation of their side chains, which are found more frequently in integral outer membrane proteins. May act in both early periplasmic and late outer membrane-associated steps of protein maturation. The sequence is that of Chaperone SurA from Polaromonas sp. (strain JS666 / ATCC BAA-500).